The sequence spans 156 residues: Ribonuclease 7 (156 aa).

A signal peptide spans 1 to 28 (MAPARAGFCPLLLLLLLGLWVAEIPVSA). The important for antibacterial activity stretch occupies residues 29–32 (KPKG). Catalysis depends on His-43, which acts as the Proton acceptor. DUMP is bound by residues His-43, Lys-66, Asn-69, and Thr-70. Cystine bridges form between Cys-51/Cys-109, Cys-65/Cys-119, Cys-83/Cys-134, and Cys-90/Cys-97. A glycan (N-linked (GlcNAc...) asparagine) is linked at Asn-127. The segment at 139–140 (KK) is important for antibacterial activity. DUMP-binding residues include His-151 and Arg-154. The Proton donor role is filled by His-151.

Expressed in collecting ducts in kidney, and in apical uroepithelium in bladder (at protein level). Expressed in various epithelial tissues including skin, respiratory tract, genito-urinary tract and, at a low level, in the gut. Expressed in liver, kidney, skeletal muscle and heart.

Its subcellular location is the secreted. Functionally, exhibits a potent RNase activity. Has broad-spectrum antimicrobial activity against many pathogenic microorganisms including uropathogenic E.coli (UPEC), and remarkably potent activity (lethal dose of 90% &lt; 30 nM) against a vancomycin resistant Enterococcus faecium. Causes loss of bacterial membrane integrity. Probably contributes to urinary tract sterility. Bactericidal activity is independent of RNase activity. In Homo sapiens (Human), this protein is Ribonuclease 7 (RNASE7).